A 569-amino-acid polypeptide reads, in one-letter code: Membrane protein insertase YidC (569 aa).

The chain crosses the membrane as a helical span at residues 6-26 (FVLFLIFATSLLFLWDAWQKE). Composition is skewed to polar residues over residues 32–52 (QGPKTAVQGTETQANTGTAGT) and 62–74 (LASSVPQRGSTAE). Residues 32–81 (QGPKTAVQGTETQANTGTAGTAETPVPGDQLASSVPQRGSTAENGAPVRA) are disordered. 5 helical membrane-spanning segments follow: residues 348-368 (VVDYGWLTVIGAPLFWLLSLF), 375-395 (WGVAIILLTMSVKLAFFPLSA), 442-462 (GGCLPILVQIPVFISLYWVLL), 479-499 (LSAPDPYYVLPVIMGISMFLQ), and 519-539 (PLAFSVFFFFFPAGLVLYSLV).

This sequence belongs to the OXA1/ALB3/YidC family. Type 1 subfamily. As to quaternary structure, interacts with the Sec translocase complex via SecD. Specifically interacts with transmembrane segments of nascent integral membrane proteins during membrane integration.

It is found in the cell inner membrane. In terms of biological role, required for the insertion and/or proper folding and/or complex formation of integral membrane proteins into the membrane. Involved in integration of membrane proteins that insert both dependently and independently of the Sec translocase complex, as well as at least some lipoproteins. Aids folding of multispanning membrane proteins. The protein is Membrane protein insertase YidC of Nitrosospira multiformis (strain ATCC 25196 / NCIMB 11849 / C 71).